A 1013-amino-acid chain; its full sequence is AP-2 complex subunit alpha-2 (1013 aa).

HEAT repeat units lie at residues 254–289 (AMRALQYFPTIEDPSTRKALFEVLQRILMGTDVVKN), 354–391 (DIIKKHQSQIITSLKDPDISIRRRALDLLYGMCDVSNA), 393–430 (DIVEELLQYLSTAEFSMREELSLKAAILAEKFAPDLSW), and 521–565 (TVST…CIDV). Residues 652 to 676 (STDPESVARSLSHPNGTLSNIDPQT) form a disordered region. The segment covering 663 to 675 (SHPNGTLSNIDPQ) has biased composition (polar residues). The GAE domain occupies 742 to 841 (ALCLKDSGVL…LDFSYKFGTN (100 aa)). The required for AP180 binding stretch occupies residues 760 to 1013 (GIKAEWRGHH…DPGAMLAGLL (254 aa)).

Belongs to the adaptor complexes large subunit family. In terms of assembly, adaptor protein complex 2 (AP-2) is a heterotetramer composed of two large adaptins (alpha-type and beta-type subunits), a medium adaptin (mu-type subunit) and a small adaptin (sigma-type subunit). Interacts with AP180.

Its subcellular location is the membrane. It localises to the coated pit. Subunit of the adaptor protein complex 2 (AP-2). Adaptor protein complexes function in protein transport via transport vesicles in different membrane traffic pathways. Adaptor protein complexes are vesicle coat components and appear to be involved in cargo selection and vesicle formation. AP-2 is involved in clathrin-dependent endocytosis in which cargo proteins are incorporated into vesicles surrounded by clathrin (clathrin-coated vesicles, CCVs) which are destined for fusion with the early endosome. The complex binds polyphosphoinositides. This Arabidopsis thaliana (Mouse-ear cress) protein is AP-2 complex subunit alpha-2 (ALPHAC-AD).